The primary structure comprises 96 residues: UPF0213 protein BCE33L0031 (96 aa).

Positions 4-79 (NKHCFYVVEC…KQLNRKQKEE (76 aa)) constitute a GIY-YIG domain.

This sequence belongs to the UPF0213 family.

In Bacillus cereus (strain ZK / E33L), this protein is UPF0213 protein BCE33L0031.